The following is a 355-amino-acid chain: Protein RecA (355 aa).

65–72 serves as a coordination point for ATP; sequence GPESSGKT.

Belongs to the RecA family.

The protein resides in the cytoplasm. Can catalyze the hydrolysis of ATP in the presence of single-stranded DNA, the ATP-dependent uptake of single-stranded DNA by duplex DNA, and the ATP-dependent hybridization of homologous single-stranded DNAs. It interacts with LexA causing its activation and leading to its autocatalytic cleavage. This chain is Protein RecA, found in Pseudomonas putida (Arthrobacter siderocapsulatus).